Here is a 909-residue protein sequence, read N- to C-terminus: Valine--tRNA ligase (909 aa).

The short motif at 52-62 is the 'HIGH' region element; the sequence is PNVTGVLHVGH. The 'KMSKS' region signature appears at 542-546; that stretch reads KMSKS. An ATP-binding site is contributed by lysine 545. A coiled-coil region spans residues 843–902; that stretch reads IDIDQLKKRFEKELEKNEQNASKIDSKLKNENFVKNAPPEVIEGEKEKHAEFLRRIEKLK.

This sequence belongs to the class-I aminoacyl-tRNA synthetase family. ValS type 1 subfamily. As to quaternary structure, monomer.

The protein resides in the cytoplasm. The enzyme catalyses tRNA(Val) + L-valine + ATP = L-valyl-tRNA(Val) + AMP + diphosphate. Functionally, catalyzes the attachment of valine to tRNA(Val). As ValRS can inadvertently accommodate and process structurally similar amino acids such as threonine, to avoid such errors, it has a 'posttransfer' editing activity that hydrolyzes mischarged Thr-tRNA(Val) in a tRNA-dependent manner. This Treponema denticola (strain ATCC 35405 / DSM 14222 / CIP 103919 / JCM 8153 / KCTC 15104) protein is Valine--tRNA ligase.